The following is a 136-amino-acid chain: Orexigenic neuropeptide QRFP (136 aa).

Positions 1–18 (MVRPYPLIYFLFLPLGAC) are cleaved as a signal peptide. Residues 19–90 (FPLLDRREPT…HAGCRFRFGR (72 aa)) constitute a propeptide that is removed on maturation. A Pyrrolidone carboxylic acid modification is found at glutamine 91. Residue phenylalanine 133 is modified to Phenylalanine amide.

The protein belongs to the RFamide neuropeptide family. Ligand for the G-protein coupled receptor QRFPR/GPR103. As to expression, expressed widely in the brain with highest expression levels in the cerebellum, medulla, pituitary, retina, vestibular nucleus, and white matter. Also expressed in the bladder, colon, coronary artery, parathyroid gland, prostate, testis, and thyroid.

The protein localises to the secreted. Its function is as follows. Stimulates feeding behavior, metabolic rate and locomotor activity and increases blood pressure. May have orexigenic activity. May promote aldosterone secretion by the adrenal gland. The protein is Orexigenic neuropeptide QRFP of Homo sapiens (Human).